A 368-amino-acid chain; its full sequence is CST complex subunit STN1 (368 aa).

The interaction with CTC1 stretch occupies residues 2-192 (AVSLGDDDAD…KCYDQPFKMP (191 aa)). The OB DNA-binding region spans 58-162 (VDVLGIVVYK…EIKATSFYKV (105 aa)). Winged helix-turn-helix (wHTH) stretches follow at residues 201–295 (AGGS…NVTE) and 296–368 (QDKD…YIVL).

Belongs to the CTC1 family. In terms of assembly, component of the CST complex.

The protein resides in the nucleus. It localises to the chromosome. It is found in the telomere. Component of the CST complex proposed to act as a specialized replication factor promoting DNA replication under conditions of replication stress or natural replication barriers such as the telomere duplex. The CST complex binds single-stranded DNA with high affinity in a sequence-independent manner, while isolated subunits bind DNA with low affinity by themselves. Initially the CST complex has been proposed to protect telomeres from DNA degradation. However, the CST complex has been shown to be involved in several aspects of telomere replication. The sequence is that of CST complex subunit STN1 from Danio rerio (Zebrafish).